Reading from the N-terminus, the 368-residue chain is NAD(P)H-quinone oxidoreductase subunit 1, chloroplastic (368 aa).

6 helical membrane-spanning segments follow: residues 27-47 (FIWI…GVLV), 97-117 (WLFN…YLVI), 130-150 (IGVF…LMAG), 269-289 (SSLF…PFLL), 308-328 (IIIG…IAIM), and 348-368 (FLLP…AFLL).

The protein belongs to the complex I subunit 1 family. In terms of assembly, NDH is composed of at least 16 different subunits, 5 of which are encoded in the nucleus.

The protein resides in the plastid. It localises to the chloroplast thylakoid membrane. The enzyme catalyses a plastoquinone + NADH + (n+1) H(+)(in) = a plastoquinol + NAD(+) + n H(+)(out). It carries out the reaction a plastoquinone + NADPH + (n+1) H(+)(in) = a plastoquinol + NADP(+) + n H(+)(out). NDH shuttles electrons from NAD(P)H:plastoquinone, via FMN and iron-sulfur (Fe-S) centers, to quinones in the photosynthetic chain and possibly in a chloroplast respiratory chain. The immediate electron acceptor for the enzyme in this species is believed to be plastoquinone. Couples the redox reaction to proton translocation, and thus conserves the redox energy in a proton gradient. The protein is NAD(P)H-quinone oxidoreductase subunit 1, chloroplastic of Physcomitrium patens (Spreading-leaved earth moss).